The chain runs to 377 residues: Chaperone protein DnaJ (377 aa).

The 66-residue stretch at 5–70 (DYYEVLEVSR…EKRTIYDRYG (66 aa)) folds into the J domain. The segment at 138-215 (GCEKKIDITY…CQGKGYHEET (78 aa)) adopts a CR-type zinc-finger fold. The Zn(2+) site is built by Cys151, Cys154, Cys167, Cys170, Cys189, Cys192, Cys203, and Cys206. 4 CXXCXGXG motif repeats span residues 151 to 158 (CEECGGTG), 167 to 174 (CDYCGGQG), 189 to 196 (CPKCHGEG), and 203 to 210 (CPSCQGKG).

It belongs to the DnaJ family. As to quaternary structure, homodimer. Zn(2+) serves as cofactor.

It is found in the cytoplasm. Participates actively in the response to hyperosmotic and heat shock by preventing the aggregation of stress-denatured proteins and by disaggregating proteins, also in an autonomous, DnaK-independent fashion. Unfolded proteins bind initially to DnaJ; upon interaction with the DnaJ-bound protein, DnaK hydrolyzes its bound ATP, resulting in the formation of a stable complex. GrpE releases ADP from DnaK; ATP binding to DnaK triggers the release of the substrate protein, thus completing the reaction cycle. Several rounds of ATP-dependent interactions between DnaJ, DnaK and GrpE are required for fully efficient folding. Also involved, together with DnaK and GrpE, in the DNA replication of plasmids through activation of initiation proteins. The sequence is that of Chaperone protein DnaJ from Sulfurovum sp. (strain NBC37-1).